A 184-amino-acid chain; its full sequence is Threonylcarbamoyl-AMP synthase (184 aa).

The region spanning 1–184 (MNNLENIVEQ…IFTQHIFRQG (184 aa)) is the YrdC-like domain.

The protein belongs to the SUA5 family. TsaC subfamily.

It is found in the cytoplasm. It catalyses the reaction L-threonine + hydrogencarbonate + ATP = L-threonylcarbamoyladenylate + diphosphate + H2O. Functionally, required for the formation of a threonylcarbamoyl group on adenosine at position 37 (t(6)A37) in tRNAs that read codons beginning with adenine. Catalyzes the conversion of L-threonine, HCO(3)(-)/CO(2) and ATP to give threonylcarbamoyl-AMP (TC-AMP) as the acyladenylate intermediate, with the release of diphosphate. In Actinobacillus pleuropneumoniae serotype 7 (strain AP76), this protein is Threonylcarbamoyl-AMP synthase.